The primary structure comprises 178 residues: CASP-like protein 5B1 (178 aa).

Residues 1-37 lie on the Cytoplasmic side of the membrane; that stretch reads MDASNPIVHPIGDHHAVDLEEGPLIVTMKELPGMPGT. A helical membrane pass occupies residues 38-58; it reads IGGLALRVGQFLFAAAAIVIM. The Extracellular segment spans residues 59–69; it reads VTGDEFTNYTA. Residue asparagine 66 is glycosylated (N-linked (GlcNAc...) asparagine). Residues 70-90 traverse the membrane as a helical segment; it reads FCYLVAAMSLQFLWSFMLAIL. At 91–104 the chain is on the cytoplasmic side; the sequence is DTYALLIKRGLRNS. A helical transmembrane segment spans residues 105 to 125; that stretch reads VLLSLFVVGDWVTATLSLAAA. The Extracellular segment spans residues 126–154; that stretch reads CSTAGVTVLFDNDLNYCGQMHCHRYQLSA. The helical transmembrane segment at 155-175 threads the bilayer; sequence AMAFLSWLLIGMSSLLTFWLW. Over 176–178 the chain is Cytoplasmic; sequence ASE.

Belongs to the Casparian strip membrane proteins (CASP) family. Homodimer and heterodimers.

The protein resides in the cell membrane. The protein is CASP-like protein 5B1 of Ginkgo biloba (Ginkgo).